Here is a 245-residue protein sequence, read N- to C-terminus: Probable phosphatase Ent638_1550 (245 aa).

The Zn(2+) site is built by His7, His9, His15, His40, Glu73, His101, His131, Asp192, and His194.

Belongs to the PHP family. In terms of assembly, homotrimer. It depends on Zn(2+) as a cofactor.

This Enterobacter sp. (strain 638) protein is Probable phosphatase Ent638_1550.